A 1350-amino-acid polypeptide reads, in one-letter code: ABC transporter G family member 45 (1350 aa).

Residues 1-23 (MAAAVELTGDGGTTAETRWLSPP) are disordered. The ABC transporter 1 domain occupies 85–357 (AACAHMCTTR…FETMGFKCPS (273 aa)). Residue 118-125 (GAPGSGKT) coordinates ATP. Residues 434-647 (NIFKACFSRE…AQNAVALNEF (214 aa)) form the ABC transmembrane type-2 1 domain. 6 consecutive transmembrane segments (helical) span residues 453 to 473 (VHIF…TLFL), 491 to 511 (ALFM…AMTI), 523 to 543 (ILAL…LPIS), 557 to 577 (VIGY…LFAM), 597 to 617 (MANM…GFVI), and 683 to 703 (ICVS…IFAL). Residues 749 to 1001 (LVFDHINYFV…NMIKYFEAIP (253 aa)) enclose the ABC transporter 2 domain. 794–801 (GITGAGKT) contacts ATP. An ABC transmembrane type-2 2 domain is found at 1074 to 1288 (AQCMACLWKQ…TVYGLMFSQL (215 aa)). 7 consecutive transmembrane segments (helical) span residues 1099 to 1119 (INTF…GSTI), 1126 to 1146 (FNIL…NCSI), 1181 to 1201 (LPYM…MIGF), 1208 to 1228 (FFWF…YGMM), 1238 to 1258 (IAAG…GFII), 1269 to 1289 (WVYW…SQLG), and 1322 to 1342 (LVTS…FLSI).

This sequence belongs to the ABC transporter superfamily. ABCG family. PDR (TC 3.A.1.205) subfamily.

Its subcellular location is the membrane. In terms of biological role, may be a general defense protein. The protein is ABC transporter G family member 45 of Oryza sativa subsp. japonica (Rice).